The following is a 379-amino-acid chain: Probable RNA 3'-terminal phosphate cyclase-like protein (379 aa).

The protein belongs to the RNA 3'-terminal cyclase family. Type 2 subfamily. As to quaternary structure, part of the small subunit (SSU) processome, composed of more than 70 proteins and the RNA chaperone small nucleolar RNA (snoRNA) U3.

It is found in the nucleus. It localises to the nucleolus. Its function is as follows. Part of the small subunit (SSU) processome, first precursor of the small eukaryotic ribosomal subunit. During the assembly of the SSU processome in the nucleolus, many ribosome biogenesis factors, an RNA chaperone and ribosomal proteins associate with the nascent pre-rRNA and work in concert to generate RNA folding, modifications, rearrangements and cleavage as well as targeted degradation of pre-ribosomal RNA by the RNA exosome. Does not have cyclase activity. This is Probable RNA 3'-terminal phosphate cyclase-like protein from Caenorhabditis elegans.